The chain runs to 776 residues: Cullin-1 (776 aa).

R63 carries the post-translational modification Omega-N-methylarginine. Residues 706-766 (DRKLLIQAAI…IEKEYLERVD (61 aa)) form the Cullin neddylation domain. A Glycyl lysine isopeptide (Lys-Gly) (interchain with G-Cter in NEDD8) cross-link involves residue K720.

It belongs to the cullin family. In terms of assembly, component of multiple Cul1-RING E3 ubiquitin-protein ligase complexes commonly known as SCF (SKP1-CUL1-F-box) complexes, consisting of CUL1, SKP1, RBX1 and a variable F-box domain-containing protein as substrate-specific subunit. Component of the SCF(FBXW11) complex containing FBXW11. Component of the SCF(SKP2) complex containing SKP2, in which it interacts directly with SKP1, SKP2 and RBX1. Component of the SCF(FBXW2) complex containing FBXW2. Component of the SCF(FBXO32) complex containing FBXO32. Component of the probable SCF(FBXO7) complex containing FBXO7. Component of the SCF(FBXO10) complex containing FBXO10. Component of the SCF(FBXO11) complex containing FBXO11. Component of the SCF(FBXO25) complex containing FBXO25. Component of the SCF(FBXO33) complex containing FBXO33. Component of the probable SCF(FBXO4) complex containing FBXO4. Component of the SCF(FBXO44) complex, composed of SKP1, CUL1 and FBXO44. Component of the SCF(BTRC) complex, composed of SKP1, CUL1 and BTRC. This complex binds phosphorylated NFKBIA. Part of a SCF complex consisting of CUL1, RBX1, SKP1 and FBXO2. Component of a SCF(SKP2)-like complex containing CUL1, SKP1, TRIM21 and SKP2. Component of the SCF(FBXO17) complex, composed of SKP1, CUL1 and FBXO17. Component of the SCF(FBXO27) complex, composed of SKP1, CUL1 and FBXO27. Component of the SCF(CCNF) complex consisting of CUL1, RBX1, SKP1 and CCNF. Interacts with CCNF. Component of the SCF(FBXL3) complex composed of CUL1, SKP1, RBX1 and FBXL3. Component of the SCF(FBXL21) complex composed of CUL1, SKP1, RBX1 and FBXL21. Component of the SCF(FBXO9) composed of CUL1, SKP1, RBX1 and FBXO9. Component of the SCF(FBXW7) composed of CUL1, SKP1, RBX1 and FBXW7. Component of the SCF(FBXO31) complex composed of CUL1, SKP1, RBX1 and FBXO31. Interacts with CHEK2; mediates CHEK2 ubiquitination and regulates its function. Part of a complex with TIP120A/CAND1 and RBX1. The unneddylated form interacts with TIP120A/CAND1 and the interaction mediates the exchange of the F-box substrate-specific subunit. Can self-associate. Interacts with FBXW8. Interacts with RNF7. Interacts with TRIM21. Interacts with COPS2. Interacts with UBE2M. Identified in a complex with RBX1 and GLMN. Interacts with CEP68 as part of the SCF(FBXW11) complex; the interaction is probably mediated by FBXW11 and the complex also contains CDK5RAP2 and PCNT. Interacts (when neddylated) with ARIH1; leading to activate the E3 ligase activity of ARIH1. Interacts with COPS9 isoform 2. Interacts with UBXN1. Interacts with KAT7, probably as part of an SCF complex; the interaction mediates KAT7 ubiquitination. Interacts with NOTCH2. Part of a complex that contains DCUN1D5, CUL1 and RBX1; this complex is bridged by CUL1. Interacts (unneddylated form) with DCUN1D1, DCUN1D2, DCUN1D3, DCUN1D4 and DCUN1D5; these interactions promote the cullin neddylation. Interacts (via the C-terminal domain) with CUL7; the interaction seems to be mediated by FBXW8; it is likely specific to FBXW8, but not other F-box proteins. Interacts with UBR2, as part of SCF(BTRC) complex; the interaction mediates 'Lys-48'-linked ubiquitination of UBR2 and is regulated by DUSP22 in the T-cell receptor signaling pathway. (Microbial infection) Interacts with Epstein-Barr virus BPLF1. As to quaternary structure, (Microbial infection) Interacts with Human adenovirus early E1A protein; this interaction inhibits RBX1-CUL1-dependent elongation reaction of ubiquitin chains by the SCF(FBXW7) complex. In terms of assembly, (Microbial infection) Interacts with vaccinia virus protein C9L. (Microbial infection) Interacts with Epstein-Barr virus (EBV) tegument protein BGLF2; this interaction might facilitate CUL1 recruitment to STAT2, leading to ubiquitination and degradation of the latter. Post-translationally, neddylated; which enhances the ubiquitination activity of SCF. Neddylation prevents binding of the inhibitor CAND1. Neddylation leads to structural rearrangment in the complex that allows interaction between the E2 ubiquitin-conjugating enzyme and the acceptor ubiquitin. Deneddylated via its interaction with the COP9 signalosome (CSN) complex. In terms of processing, (Microbial infection) Deneddylated by Epstein-Barr virus BPLF1 leading to a S-phase-like environment that is required for efficient replication of the viral genome. In terms of tissue distribution, expressed in lung fibroblasts.

It functions in the pathway protein modification; protein ubiquitination. Its function is as follows. Core component of multiple cullin-RING-based SCF (SKP1-CUL1-F-box protein) E3 ubiquitin-protein ligase complexes, which mediate the ubiquitination of proteins involved in cell cycle progression, signal transduction and transcription. SCF complexes and ARIH1 collaborate in tandem to mediate ubiquitination of target proteins. In the SCF complex, serves as a rigid scaffold that organizes the SKP1-F-box protein and RBX1 subunits. May contribute to catalysis through positioning of the substrate and the ubiquitin-conjugating enzyme. The E3 ubiquitin-protein ligase activity of the complex is dependent on the neddylation of the cullin subunit and exchange of the substrate recognition component is mediated by TIP120A/CAND1. The functional specificity of the SCF complex depends on the F-box protein as substrate recognition component. SCF(BTRC) and SCF(FBXW11) direct ubiquitination of CTNNB1 and participate in Wnt signaling. SCF(FBXW11) directs ubiquitination of phosphorylated NFKBIA. SCF(BTRC) directs ubiquitination of NFKBIB, NFKBIE, ATF4, SMAD3, SMAD4, CDC25A, FBXO5 and probably NFKB2. SCF(BTRC) and/or SCF(FBXW11) direct ubiquitination of CEP68. SCF(SKP2) directs ubiquitination of phosphorylated CDKN1B/p27kip and is involved in regulation of G1/S transition. SCF(SKP2) directs ubiquitination of ORC1, CDT1, RBL2, ELF4, CDKN1A, RAG2, FOXO1A, and probably MYC and TAL1. SCF(FBXW7) directs ubiquitination of CCNE1, NOTCH1 released notch intracellular domain (NICD), and probably PSEN1. SCF(FBXW2) directs ubiquitination of GCM1. SCF(FBXO32) directs ubiquitination of MYOD1. SCF(FBXO7) directs ubiquitination of BIRC2 and DLGAP5. SCF(FBXO33) directs ubiquitination of YBX1. SCF(FBXO1) directs ubiquitination of BCL6 and DTL but does not seem to direct ubiquitination of TP53. SCF(BTRC) mediates the ubiquitination of NFKBIA at 'Lys-21' and 'Lys-22'; the degradation frees the associated NFKB1-RELA dimer to translocate into the nucleus and to activate transcription. SCF(CCNF) directs ubiquitination of CCP110. SCF(FBXL3) and SCF(FBXL21) direct ubiquitination of CRY1 and CRY2. SCF(FBXO9) directs ubiquitination of TTI1 and TELO2. SCF(FBXO10) directs ubiquitination of BCL2. Neddylated CUL1-RBX1 ubiquitinates p53/TP53 recruited by Cul7-RING(FBXW8) complex. SCF(BTRC) directs 'Lys-48'-linked ubiquitination of UBR2 in the T-cell receptor signaling pathway. The SCF(FBXO31) protein ligase complex specifically mediates the ubiquitination of proteins amidated at their C-terminus in response to oxidative stress. In Homo sapiens (Human), this protein is Cullin-1 (CUL1).